The following is a 149-amino-acid chain: Large ribosomal subunit protein uL13 (149 aa).

It belongs to the universal ribosomal protein uL13 family. In terms of assembly, part of the 50S ribosomal subunit.

Its function is as follows. This protein is one of the early assembly proteins of the 50S ribosomal subunit, although it is not seen to bind rRNA by itself. It is important during the early stages of 50S assembly. The protein is Large ribosomal subunit protein uL13 of Chlorobium limicola (strain DSM 245 / NBRC 103803 / 6330).